Consider the following 717-residue polypeptide: MPNTSFPVPSKFPLGPPAAVCGSGETLRPAPPSGGTMKAAEEEHYSYVSPSVTSTLPLPTAHSALPAACHDLQTSTPGISAVPSANHPPSYGGAVDSGPSGYFLSSGNTRPNGAPTLESPRIEITSYLGLHHGSGQFFHDVEVEDVLPSCKRSPSTATLHLPSLEAYRDPSCLSPASSLSSRSCNSEASSYESNYSYPYASPQTSPWQSPCVSPKTTDPEEGFPRSLGACHLLGSPRHSPSTSPRASITEESWLGARGSRPTSPCNKRKYSLNGRQPSCSPHHSPTPSPHGSPRVSVTEDTWLGNTTQYTSSAIVAAINALTTDSTLDLGDGVPIKSRKTALEHAPSVALKVEPAGEDLGTTPPTSDFPPEEYTFQHLRKGAFCEQYLSVPQASYQWAKPKSLSPTSYMSPSLPALDWQLPSHSGPYELRIEVQPKSHHRAHYETEGSRGAVKASAGGHPIVQLHGYLENEPLTLQLFIGTADDRLLRPHAFYQVHRITGKTVSTTSHEIILSNTKVLEIPLLPENNMRAIIDCAGILKLRNSDIELRKGETDIGRKNTRVRLVFRVHIPQPNGRTLSLQVASNPIECSQRSAQELPLVEKQSTDSYPVIGGKKMVLSGHNFLQDSKVIFVEKAPDGHHVWEMEAKTDRDLCKPNSLVVEIPPFRNQRITSPAQVSFYVCNGKRKRSQYQRFTYLPANGNSVFLTLSSESELRGGFY.

The tract at residues 1–38 (MPNTSFPVPSKFPLGPPAAVCGSGETLRPAPPSGGTMK) is disordered. Positions 120-125 (PRIEIT) are calcineurin-binding. The interval 128–220 (LGLHHGSGQF…CVSPKTTDPE (93 aa)) is transactivation domain A (TAD-A). A disordered region spans residues 202–298 (PQTSPWQSPC…PHGSPRVSVT (97 aa)). Over residues 203 to 216 (QTSPWQSPCVSPKT) the composition is skewed to polar residues. 2 tandem repeats follow at residues 205–221 (SPWQ…DPEE) and 235–251 (SPRH…ITEE). Residues 205-300 (SPWQSPCVSP…GSPRVSVTED (96 aa)) are 3 X SP repeats. Ser-235 and Ser-239 each carry phosphoserine. Over residues 238–250 (HSPSTSPRASITE) the composition is skewed to polar residues. Ser-247 is subject to Phosphoserine; by PKA. The Nuclear localization signal motif lies at 267-269 (KRK). Residues Ser-271 and Ser-296 each carry the phosphoserine; by PKA modification. Copy 3 of the repeat occupies 284–300 (SPTPSPHGSPRVSVTED). The Nuclear export signal motif lies at 312 to 323 (SAIVAAINALTT). The RHD domain maps to 411-593 (PSLPALDWQL…NPIECSQRSA (183 aa)). A DNA-binding region spans residues 440–447 (RAHYETEG). The Nuclear localization signal motif lies at 683-685 (KRK).

As to quaternary structure, member of the multicomponent NFATC transcription complex that consists of at least two components, a pre-existing cytoplasmic component NFATC2 and an inducible nuclear component NFATC1. Other members such as NFATC4, NFATC3 or members of the activating protein-1 family, MAF, GATA4 and Cbp/p300 can also bind the complex. NFATC proteins bind to DNA as monomers. Interacts with HOMER2 and HOMER3; this interaction may compete with calcineurin/PPP3CA-binding and hence prevent NFATC1 dephosphorylation and activation. Interacts with TLE6/GRG6. Post-translationally, phosphorylated by NFATC-kinase and GSK3B; phosphorylation induces NFATC1 nuclear exit and dephosphorylation by calcineurin promotes nuclear import. Phosphorylation by PKA and DYRK2 negatively modulates nuclear accumulation, and promotes subsequent phosphorylation by GSK3B or casein kinase 1. As to expression, expressed in the submandibular gland (at protein level). Expressed in basal epidermal cells (at protein level). Expressed in spleen, skeletal muscle and skin. Express in the lung and thymus. Weakly expressed in heart, brain, liver and kidney. Not expressed in testis. Expressed in osteoclasts. Also expressed during TNFSF11/RANKL-induced differentiation of bone marrow-derived macrophages to osteoclasts.

The protein localises to the cytoplasm. Its subcellular location is the nucleus. Its function is as follows. Plays a role in the inducible expression of cytokine genes in T-cells, especially in the induction of the IL-2 or IL-4 gene transcription. Also controls gene expression in embryonic cardiac cells. Could regulate not only the activation and proliferation but also the differentiation and programmed death of T-lymphocytes as well as lymphoid and non-lymphoid cells. Required for osteoclastogenesis and regulates many genes important for osteoclast differentiation and function. This is Nuclear factor of activated T-cells, cytoplasmic 1 (Nfatc1) from Mus musculus (Mouse).